The chain runs to 49 residues: Large ribosomal subunit protein bL33B (49 aa).

The protein belongs to the bacterial ribosomal protein bL33 family.

In terms of biological role, plays a role in sporulation at high temperatures. The protein is Large ribosomal subunit protein bL33B (rpmGB) of Bacillus subtilis (strain 168).